The primary structure comprises 250 residues: MAGHSKWANIKRQKARVDAKKGKTFTQLSRAIIVAARHGLPDPAGNFQLRTAIEKAKAAGIPNENIERAIAKGAGTYNDGEANYEEIRYEGYGAGGVAILIEALTDNRNRTAADLRSAFSKNGGNLGETGCVSWMFSHKGVVTLTGEIDEEALLEASLIGEAEGYSAIEDSDEVEVLSAVENLEHLNQTLQDAGFTVKEAELRWFPETEMNLTDEVQIQTILKMIETIEALDDVQTVTSNLAIAPAFATL.

Belongs to the TACO1 family.

Its subcellular location is the cytoplasm. The polypeptide is Probable transcriptional regulatory protein SYNPCC7002_A1640 (Picosynechococcus sp. (strain ATCC 27264 / PCC 7002 / PR-6) (Agmenellum quadruplicatum)).